The sequence spans 90 residues: Large ribosomal subunit protein uL16c (90 aa).

It belongs to the universal ribosomal protein uL16 family. In terms of assembly, part of the 50S ribosomal subunit.

Its subcellular location is the plastid. It localises to the chloroplast. This Oenothera ammophila (Evening primerose) protein is Large ribosomal subunit protein uL16c (rpl16).